A 170-amino-acid chain; its full sequence is RNA pyrophosphohydrolase (170 aa).

One can recognise a Nudix hydrolase domain in the interval 6-149 (GFRPNVGIVI…KRDVYRRALK (144 aa)). A Nudix box motif is present at residues 38–59 (GGIDDGETPEQAMYRELYEEVG).

The protein belongs to the Nudix hydrolase family. RppH subfamily. A divalent metal cation is required as a cofactor.

Functionally, accelerates the degradation of transcripts by removing pyrophosphate from the 5'-end of triphosphorylated RNA, leading to a more labile monophosphorylated state that can stimulate subsequent ribonuclease cleavage. In Aliivibrio salmonicida (strain LFI1238) (Vibrio salmonicida (strain LFI1238)), this protein is RNA pyrophosphohydrolase.